Here is a 206-residue protein sequence, read N- to C-terminus: MDEDVLTTLKILIIGESGVGKSSLLLRFTDDTFDPELAATIGVDFKVKTISVDGNKAKLAIWDTAGQERFRTLTPSYYRGAQGVILVYDVTRRDTFVKLDNWLNELETYCTRNDIVNMLVGNKIDKENREVDRNEGLKFARKHSMLFIEASAKTCDGVQCAFEELVEKIIQTPGLWESENQNKGVKLTHREEGQGGGACGGYCSVL.

Met1 carries the post-translational modification N-acetylmethionine. GTP contacts are provided by Ser17, Gly20, Lys21, Ser22, Ser23, Asp34, Pro35, Thr40, Gly66, Lys123, and Asp125. Ser22 is a binding site for Mg(2+). 2 short sequence motifs (switch) span residues 31–45 (DTFD…GVDF) and 63–80 (DTAG…YYRG). Thr40 is a binding site for Mg(2+). Ser144 is subject to Phosphoserine. Ala152 is a GTP binding site. Cys199 carries the S-palmitoyl cysteine lipid modification. Cys203 carries the post-translational modification Cysteine methyl ester. Cys203 carries S-geranylgeranyl cysteine lipidation. Residues 204–206 (SVL) constitute a propeptide, removed in mature form.

This sequence belongs to the small GTPase superfamily. Rab family. As to quaternary structure, interacts (in GTP-bound form) with ZFYVE1. Interacts with ZW10 and this interaction is enhanced in the presence of ZFYVE1. Interacts with BSCL2. The cofactor is Mg(2+).

It localises to the endoplasmic reticulum membrane. The protein localises to the golgi apparatus. Its subcellular location is the cis-Golgi network membrane. The protein resides in the lipid droplet. It is found in the apical cell membrane. It catalyses the reaction GTP + H2O = GDP + phosphate + H(+). Regulated by guanine nucleotide exchange factors (GEFs) which promote the exchange of bound GDP for free GTP. Regulated by GTPase activating proteins (GAPs) which increase the GTP hydrolysis activity at the ER membrane. Inhibited by GDP dissociation inhibitors (GDIs) which prevent Rab-GDP dissociation. Its function is as follows. The small GTPases Rab are key regulators of intracellular membrane trafficking, from the formation of transport vesicles to their fusion with membranes. Rabs cycle between an inactive GDP-bound form and an active GTP-bound form that is able to recruit to membranes different sets of downstream effectors directly responsible for vesicle formation, movement, tethering and fusion. RAB18 is required for the localization of ZFYVE1 to lipid droplets and for its function in mediating the formation of endoplasmic reticulum-lipid droplets (ER-LD) contacts. Also required for maintaining endoplasmic reticulum structure. Plays a role in apical endocytosis/recycling. Plays a key role in eye and brain development and neurodegeneration. This chain is Ras-related protein Rab-18 (RAB18), found in Bos taurus (Bovine).